A 508-amino-acid polypeptide reads, in one-letter code: Photosystem II CP47 reaction center protein (508 aa).

Transmembrane regions (helical) follow at residues 21–36 (AVHIMHTALVSGWAGS), 101–115 (IILSGLLFLAAIWHW), 140–156 (GIHLFLSGLLCFGFGAF), 203–218 (IAAGILGILAGLFHLS), 237–252 (VLSSSIAAVFFAAFIV), and 457–472 (CFALLFFFGHIWHGAR).

This sequence belongs to the PsbB/PsbC family. PsbB subfamily. As to quaternary structure, PSII is composed of 1 copy each of membrane proteins PsbA, PsbB, PsbC, PsbD, PsbE, PsbF, PsbH, PsbI, PsbJ, PsbK, PsbL, PsbM, PsbT, PsbX, PsbY, PsbZ, Psb30/Ycf12, at least 3 peripheral proteins of the oxygen-evolving complex and a large number of cofactors. It forms dimeric complexes. Requires Binds multiple chlorophylls. PSII binds additional chlorophylls, carotenoids and specific lipids. as cofactor.

It localises to the plastid. It is found in the chloroplast thylakoid membrane. One of the components of the core complex of photosystem II (PSII). It binds chlorophyll and helps catalyze the primary light-induced photochemical processes of PSII. PSII is a light-driven water:plastoquinone oxidoreductase, using light energy to abstract electrons from H(2)O, generating O(2) and a proton gradient subsequently used for ATP formation. The sequence is that of Photosystem II CP47 reaction center protein from Chara vulgaris (Common stonewort).